Here is an 84-residue protein sequence, read N- to C-terminus: Delta-conotoxin-like MVIB (84 aa).

Residues 1–22 form the signal peptide; sequence MKLTCVMIVAVLFLTAWTFVTA. Residues 23-51 constitute a propeptide that is removed on maturation; sequence DDSRYGLKDLFPKERHEMKNPEASKLNQR. Intrachain disulfides connect C54/C69, C61/C73, and C68/C77. P65 is subject to 4-hydroxyproline. A Serine amide modification is found at S83.

This sequence belongs to the conotoxin O1 superfamily. Expressed by the venom duct.

It localises to the secreted. Delta-conotoxins bind to site 6 of voltage-gated sodium channels (Nav) and inhibit the inactivation process. The sequence is that of Delta-conotoxin-like MVIB from Conus magus (Magical cone).